Here is an 893-residue protein sequence, read N- to C-terminus: cGMP-specific 3',5'-cyclic phosphodiesterase (893 aa).

2 consecutive GAF domains span residues 21–173 and 205–390; these read DIDV…GIGI and NLEC…GLGI. Residues 420–743 enclose the PDEase domain; sequence GQDQTEKLIQ…RNWQDLAEKV (324 aa). Histidine 496 acts as the Proton donor in catalysis. The a divalent metal cation site is built by histidine 500, histidine 536, aspartate 537, and aspartate 647. Disordered stretches follow at residues 784–807 and 844–893; these read QQSQ…RLSI and HVSE…CALL. Basic and acidic residues-rich tracts occupy residues 789-800 and 844-853; these read GGDDSHTPEHQR and HVSEDMDDKS. A compositionally biased stretch (low complexity) spans 864-880; sequence SVGRMSASSSTSSAGTV. Basic residues predominate over residues 883 to 893; the sequence is SKKRSKLCALL. Cysteine 890 is modified (cysteine methyl ester). Residue cysteine 890 is the site of S-farnesyl cysteine attachment. Residues 891-893 constitute a propeptide, removed in mature form; it reads ALL.

This sequence belongs to the cyclic nucleotide phosphodiesterase family. As to quaternary structure, interacts with PrBP. A divalent metal cation is required as a cofactor.

It is found in the cell membrane. The catalysed reaction is 3',5'-cyclic GMP + H2O = GMP + H(+). Its function is as follows. Has a role regulating cGMP transport in Malpighian tubule principal cells. The chain is cGMP-specific 3',5'-cyclic phosphodiesterase from Drosophila virilis (Fruit fly).